The sequence spans 454 residues: Guanine deaminase (454 aa).

Positions 82 and 84 each coordinate Zn(2+). Substrate is bound by residues 84–87 (HAPQ), 213–214 (RF), 240–243 (HISE), and Asp330. Residues His240 and Asp330 each coordinate Zn(2+). The residue at position 453 (Ser453) is a Phosphoserine.

This sequence belongs to the metallo-dependent hydrolases superfamily. ATZ/TRZ family. As to quaternary structure, homodimer. Zn(2+) is required as a cofactor.

The enzyme catalyses guanine + H2O + H(+) = xanthine + NH4(+). It participates in purine metabolism; guanine degradation; xanthine from guanine: step 1/1. Its function is as follows. Catalyzes the hydrolytic deamination of guanine, producing xanthine and ammonia. This Rattus norvegicus (Rat) protein is Guanine deaminase (Gda).